The chain runs to 134 residues: Small ribosomal subunit protein bS16 (134 aa).

Residues glycine 80–glutamate 134 form a disordered region. The segment covering alanine 115–glutamate 134 has biased composition (low complexity).

The protein belongs to the bacterial ribosomal protein bS16 family.

This Brucella anthropi (strain ATCC 49188 / DSM 6882 / CCUG 24695 / JCM 21032 / LMG 3331 / NBRC 15819 / NCTC 12168 / Alc 37) (Ochrobactrum anthropi) protein is Small ribosomal subunit protein bS16.